Here is a 268-residue protein sequence, read N- to C-terminus: Imidazole glycerol phosphate synthase subunit HisF (268 aa).

Active-site residues include D12 and D131.

The protein belongs to the HisA/HisF family. In terms of assembly, heterodimer of HisH and HisF.

Its subcellular location is the cytoplasm. It catalyses the reaction 5-[(5-phospho-1-deoxy-D-ribulos-1-ylimino)methylamino]-1-(5-phospho-beta-D-ribosyl)imidazole-4-carboxamide + L-glutamine = D-erythro-1-(imidazol-4-yl)glycerol 3-phosphate + 5-amino-1-(5-phospho-beta-D-ribosyl)imidazole-4-carboxamide + L-glutamate + H(+). The protein operates within amino-acid biosynthesis; L-histidine biosynthesis; L-histidine from 5-phospho-alpha-D-ribose 1-diphosphate: step 5/9. In terms of biological role, IGPS catalyzes the conversion of PRFAR and glutamine to IGP, AICAR and glutamate. The HisF subunit catalyzes the cyclization activity that produces IGP and AICAR from PRFAR using the ammonia provided by the HisH subunit. The chain is Imidazole glycerol phosphate synthase subunit HisF from Chelativorans sp. (strain BNC1).